A 391-amino-acid polypeptide reads, in one-letter code: MSRFLICSFALVLLYPAGIDMYLVGLPRIAADLNASEAQLHIAFSVYLAGMAAAMLFAGKVADRSGRKPVAIPGAALFIIASVFCSLAETSALFLAGRFLQGLGAGCCYVVAFAILRDTLDDRRRAKVLSLLNGITCIIPVLAPVLGHLIMLKFPWQSLFWTMATMGIALLMLSLFILKETRPAAPTTSDKPRENSESLLNRFFLSRVVITTLSVSVILTFVNTSPVLLMEIMGFERGEYATIMALTAGVSMTVSFSTPFALGIFKPRTLMITSQVLFLAAGITLAVSPSHAVSLFGITLICAGFSVGFGVAMSQALGPFSLRAGVASSTLGIAQVCGSSLWIWLAAVVGIGAWNMLIGILIACSIVSLLLIMFVAPGRPVAAHEEIHHHA.

A run of 12 helical transmembrane segments spans residues 4–24, 42–62, 69–89, 93–113, 131–151, 158–178, 203–222, 245–265, 269–289, 293–313, 331–351, and 356–376; these read FLICSFALVLLYPAGIDMYLV, IAFSVYLAGMAAAMLFAGKVA, PVAIPGAALFIIASVFCSLAE, LFLAGRFLQGLGAGCCYVVAF, LLNGITCIIPVLAPVLGHLIM, SLFWTMATMGIALLMLSLFIL, FFLSRVVITTLSVSVILTFV, ALTAGVSMTVSFSTPFALGIF, TLMITSQVLFLAAGITLAVSP, VSLFGITLICAGFSVGFGVAM, LGIAQVCGSSLWIWLAAVVGI, and MLIGILIACSIVSLLLIMFVA.

The protein belongs to the major facilitator superfamily. DHA1 family. MdtL (TC 2.A.1.2.22) subfamily.

It is found in the cell inner membrane. In terms of biological role, confers resistance to chloramphenicol. In Escherichia coli O45:K1 (strain S88 / ExPEC), this protein is Multidrug resistance protein MdtL.